The primary structure comprises 291 residues: Probable ABC transporter permease protein PH1038 (291 aa).

The next 8 membrane-spanning stretches (helical) occupy residues 7 to 27 (PFFF…YPVF), 75 to 95 (IVWI…FALL), 106 to 126 (IIKS…GLII), 133 to 153 (GAGV…AITW), 160 to 180 (ALFS…MLMY), 208 to 228 (FVIW…TLLW), 232 to 252 (IFDI…MVLA), and 267 to 287 (YAAV…LWLI). Residues 71–286 (LIHNIVWIAI…ALTFIPALWL (216 aa)) enclose the ABC transmembrane type-1 domain.

It belongs to the binding-protein-dependent transport system permease family. MalFG subfamily.

Its subcellular location is the cell membrane. Probably part of a binding-protein-dependent transport system PH1036/38/39. Probably responsible for the translocation of the substrate across the membrane. This Pyrococcus horikoshii (strain ATCC 700860 / DSM 12428 / JCM 9974 / NBRC 100139 / OT-3) protein is Probable ABC transporter permease protein PH1038.